A 237-amino-acid chain; its full sequence is MSKTTPDRPRRNFYGRIKGKTLKPNQRTYLDEDLTPLAPGPVSWQDNPTRQPLDLNALFGGRETWLEIGFGGGEHLVHQAASNPGIGIIGAEPYINGVAMLLGKIRAAGGDNVRVHPGDVRDLFDVLPAQSISRAFLLYPDPWPKKRHHRRRFVTPEHLEPLARVLKPGAIFRVATDIPDYVRQTLEEVPRAGFEWLAERPADWRQPWGDWISTRYEQKALREGRVPHYLTFRRLEG.

The S-adenosyl-L-methionine site is built by Glu-67, Glu-92, Asp-119, and Asp-141. Asp-141 is an active-site residue. Substrate is bound by residues Lys-145, Asp-177, and 214–217 (TRYE).

It belongs to the class I-like SAM-binding methyltransferase superfamily. TrmB family.

It catalyses the reaction guanosine(46) in tRNA + S-adenosyl-L-methionine = N(7)-methylguanosine(46) in tRNA + S-adenosyl-L-homocysteine. It participates in tRNA modification; N(7)-methylguanine-tRNA biosynthesis. Its function is as follows. Catalyzes the formation of N(7)-methylguanine at position 46 (m7G46) in tRNA. The polypeptide is tRNA (guanine-N(7)-)-methyltransferase (Ruegeria pomeroyi (strain ATCC 700808 / DSM 15171 / DSS-3) (Silicibacter pomeroyi)).